The sequence spans 880 residues: Alanine--tRNA ligase (880 aa).

Positions 566, 570, 668, and 672 each coordinate Zn(2+).

Belongs to the class-II aminoacyl-tRNA synthetase family. It depends on Zn(2+) as a cofactor.

The protein localises to the cytoplasm. The enzyme catalyses tRNA(Ala) + L-alanine + ATP = L-alanyl-tRNA(Ala) + AMP + diphosphate. Its function is as follows. Catalyzes the attachment of alanine to tRNA(Ala) in a two-step reaction: alanine is first activated by ATP to form Ala-AMP and then transferred to the acceptor end of tRNA(Ala). Also edits incorrectly charged Ser-tRNA(Ala) and Gly-tRNA(Ala) via its editing domain. The chain is Alanine--tRNA ligase from Nostoc sp. (strain PCC 7120 / SAG 25.82 / UTEX 2576).